A 201-amino-acid polypeptide reads, in one-letter code: Probable molybdenum cofactor guanylyltransferase (201 aa).

GTP is bound by residues 16–18 (LAG), Lys28, Asp75, and Asp107. Position 107 (Asp107) interacts with Mg(2+).

It belongs to the MobA family. The cofactor is Mg(2+).

It localises to the cytoplasm. It carries out the reaction Mo-molybdopterin + GTP + H(+) = Mo-molybdopterin guanine dinucleotide + diphosphate. Functionally, transfers a GMP moiety from GTP to Mo-molybdopterin (Mo-MPT) cofactor (Moco or molybdenum cofactor) to form Mo-molybdopterin guanine dinucleotide (Mo-MGD) cofactor. The chain is Probable molybdenum cofactor guanylyltransferase from Mycobacterium marinum (strain ATCC BAA-535 / M).